The chain runs to 525 residues: Coronin-2A (525 aa).

WD repeat units lie at residues 24–71 (NCYD…TGKL), 72–122 (DPHY…RNLT), 123–170 (AYRK…SVIT), 171–214 (SPMS…AGTV), 215–259 (LQEA…DNLS), 260–305 (VPLM…ADKP), and 306–342 (HLSY…RFYK). A coiled-coil region spans residues 485-524 (QMFYRQQEEIRRLRELLTQREVQAKQLELEIKNLRMGSEQ).

Belongs to the WD repeat coronin family. As to quaternary structure, binds actin. Component of the N-Cor repressor complex, at least composed of NCOR1, NCOR2, HDAC3, TBL1X, TBL1R, CORO2A and GPS2.

The chain is Coronin-2A (CORO2A) from Homo sapiens (Human).